The following is a 355-amino-acid chain: Protein RecA (355 aa).

Residue glycine 66 to threonine 73 participates in ATP binding. A disordered region spans residues aspartate 331–glutamate 355. A compositionally biased stretch (acidic residues) spans valine 332–glutamine 344.

The protein belongs to the RecA family.

The protein localises to the cytoplasm. Functionally, can catalyze the hydrolysis of ATP in the presence of single-stranded DNA, the ATP-dependent uptake of single-stranded DNA by duplex DNA, and the ATP-dependent hybridization of homologous single-stranded DNAs. It interacts with LexA causing its activation and leading to its autocatalytic cleavage. The protein is Protein RecA of Latilactobacillus sakei subsp. sakei (strain 23K) (Lactobacillus sakei subsp. sakei).